The primary structure comprises 202 residues: Ribosome biogenesis regulatory protein homolog (202 aa).

The segment at 82-103 (TLPPPTTPLPREKPVPQPKPET) is disordered.

Belongs to the RRS1 family. Component of a hexameric 5S RNP precursor complex, composed of 5S RNA, RRS1, RPF2, RPL5, RPL11 and SYO1; this complex acts as a precursor for ribosome assembly.

The protein resides in the nucleus. In terms of biological role, involved in ribosomal large subunit assembly. In Chaetomium thermophilum (strain DSM 1495 / CBS 144.50 / IMI 039719) (Thermochaetoides thermophila), this protein is Ribosome biogenesis regulatory protein homolog.